Consider the following 351-residue polypeptide: Penicillolysin (351 aa).

The first 19 residues, 1–19 (MRFTTLSTAFLALAQNVYA), serve as a signal peptide directing secretion. Residues 20–174 (FPIESDLSAL…TKALKPLDRR (155 aa)) constitute a propeptide that is removed on maturation. Asn52 and Asn181 each carry an N-linked (GlcNAc...) asparagine glycan. His302 lines the Zn(2+) pocket. The active site involves Glu303. His306 and Asp317 together coordinate Zn(2+).

The protein belongs to the peptidase M35 family. Zn(2+) is required as a cofactor.

The catalysed reaction is Preferential cleavage of bonds with hydrophobic residues in P1'. Also 3-Asn-|-Gln-4 and 8-Gly-|-Ser-9 bonds in insulin B chain.. The protein is Penicillolysin (plnC) of Penicillium citrinum.